The following is a 370-amino-acid chain: Forkhead box protein J1.2 (370 aa).

Residues 45–74 form a disordered region; it reads ANSRPPVPRVSQGPCSPPAGDTASCQAPRT. The fork-head DNA-binding region spans 108 to 202; that stretch reads KPPYSYATLI…VNGVLKRRRM (95 aa). The interval 227-246 is disordered; it reads PGSHHMQHISGGHRQSRRYE.

The protein belongs to the FOXJ1 family.

The protein resides in the nucleus. Functionally, key transcription factor required for motile ciliogenesis. Activates genes essential for motile cilia formation and function. This chain is Forkhead box protein J1.2, found in Xenopus laevis (African clawed frog).